A 249-amino-acid chain; its full sequence is DNA repair protein RecO (249 aa).

It belongs to the RecO family.

Involved in DNA repair and RecF pathway recombination. The sequence is that of DNA repair protein RecO from Lactobacillus delbrueckii subsp. bulgaricus (strain ATCC 11842 / DSM 20081 / BCRC 10696 / JCM 1002 / NBRC 13953 / NCIMB 11778 / NCTC 12712 / WDCM 00102 / Lb 14).